A 353-amino-acid polypeptide reads, in one-letter code: MTQRKIIHIDCDCFYAAIEMRDEPELAGKPLAVGGSAERRGVIATCNYEARAYGVRSAMSSRHALKLCPDLTIVKPRMEAYKEASREIHSIFRDYTDLIEPLSLDEAFLDVSDTHHFSGSATRIAQDIRRRVSNQLHITVSAGVAPNKFLAKIASDWKKPNGLFVITPDQVEDFVASLPVTKLHGVGKVTADKLGRLGIVDCADLRSRSKLALVREFGSFGERLWSLAHGIDDRPVQNDSRRQSVSVENTYDTDLPDLAACLEKLPALLETLGTRMERMEGQYRPGKPFVKVKFHDFTQTTLEQSGAGRDLGSYEQLLTQAFARGGKPVRLLGIGVRLHDLRDAHEQLELFST.

In terms of domain architecture, UmuC spans Ile6–Gly187. Mg(2+) contacts are provided by Asp10 and Asp105. Glu106 is a catalytic residue.

Belongs to the DNA polymerase type-Y family. As to quaternary structure, monomer. Mg(2+) serves as cofactor.

The protein resides in the cytoplasm. The enzyme catalyses DNA(n) + a 2'-deoxyribonucleoside 5'-triphosphate = DNA(n+1) + diphosphate. Poorly processive, error-prone DNA polymerase involved in untargeted mutagenesis. Copies undamaged DNA at stalled replication forks, which arise in vivo from mismatched or misaligned primer ends. These misaligned primers can be extended by PolIV. Exhibits no 3'-5' exonuclease (proofreading) activity. May be involved in translesional synthesis, in conjunction with the beta clamp from PolIII. The polypeptide is DNA polymerase IV (Pseudomonas syringae pv. tomato (strain ATCC BAA-871 / DC3000)).